Reading from the N-terminus, the 170-residue chain is Small ribosomal subunit protein uS5 (170 aa).

An S5 DRBM domain is found at 13–76 (LLEKLVGVRR…ENARKNMISV (64 aa)).

The protein belongs to the universal ribosomal protein uS5 family. Part of the 30S ribosomal subunit. Contacts proteins S4 and S8.

In terms of biological role, with S4 and S12 plays an important role in translational accuracy. Its function is as follows. Located at the back of the 30S subunit body where it stabilizes the conformation of the head with respect to the body. The polypeptide is Small ribosomal subunit protein uS5 (Nitrosococcus oceani (strain ATCC 19707 / BCRC 17464 / JCM 30415 / NCIMB 11848 / C-107)).